The following is a 167-amino-acid chain: Lipoprotein signal peptidase (167 aa).

Transmembrane regions (helical) follow at residues 8–28 (TFLTLLLLASIDWVSKLVVLL), 46–66 (WGHFSFLIIPSFNEGAAFGLF), 68–88 (QYKIPLLIFRVCVILGLALFL), and 101–121 (IALTLILAGALGNVGDILLHG). Active-site residues include aspartate 125 and aspartate 143. A helical membrane pass occupies residues 139–159 (FNLADAFISIGTLLLIGHLYF).

This sequence belongs to the peptidase A8 family.

Its subcellular location is the cell inner membrane. The catalysed reaction is Release of signal peptides from bacterial membrane prolipoproteins. Hydrolyzes -Xaa-Yaa-Zaa-|-(S,diacylglyceryl)Cys-, in which Xaa is hydrophobic (preferably Leu), and Yaa (Ala or Ser) and Zaa (Gly or Ala) have small, neutral side chains.. It functions in the pathway protein modification; lipoprotein biosynthesis (signal peptide cleavage). Its function is as follows. This protein specifically catalyzes the removal of signal peptides from prolipoproteins. The chain is Lipoprotein signal peptidase from Chlamydia trachomatis serovar L2b (strain UCH-1/proctitis).